We begin with the raw amino-acid sequence, 459 residues long: Bifunctional protein GlmU (459 aa).

The pyrophosphorylase stretch occupies residues 1–229 (MSNFAIXLAA…FDESLGVNDR (229 aa)). UDP-N-acetyl-alpha-D-glucosamine contacts are provided by residues 8–11 (LAAG), Lys22, Gln72, and 77–78 (GT). Residue Asp102 coordinates Mg(2+). Gly139, Glu154, Asn169, and Asn227 together coordinate UDP-N-acetyl-alpha-D-glucosamine. Asn227 lines the Mg(2+) pocket. The tract at residues 230–250 (VALATAESVMRRRINHKHMVN) is linker. Residues 251-459 (GVSFVNPEAT…TRLPHHPKNQ (209 aa)) form an N-acetyltransferase region. Positions 332 and 350 each coordinate UDP-N-acetyl-alpha-D-glucosamine. The active-site Proton acceptor is the His362. Positions 365 and 376 each coordinate UDP-N-acetyl-alpha-D-glucosamine. Residues Ala379, 385–386 (NY), Ser404, Ala422, and Arg439 each bind acetyl-CoA.

It in the N-terminal section; belongs to the N-acetylglucosamine-1-phosphate uridyltransferase family. This sequence in the C-terminal section; belongs to the transferase hexapeptide repeat family. In terms of assembly, homotrimer. The cofactor is Mg(2+).

It localises to the cytoplasm. It catalyses the reaction alpha-D-glucosamine 1-phosphate + acetyl-CoA = N-acetyl-alpha-D-glucosamine 1-phosphate + CoA + H(+). It carries out the reaction N-acetyl-alpha-D-glucosamine 1-phosphate + UTP + H(+) = UDP-N-acetyl-alpha-D-glucosamine + diphosphate. It functions in the pathway nucleotide-sugar biosynthesis; UDP-N-acetyl-alpha-D-glucosamine biosynthesis; N-acetyl-alpha-D-glucosamine 1-phosphate from alpha-D-glucosamine 6-phosphate (route II): step 2/2. The protein operates within nucleotide-sugar biosynthesis; UDP-N-acetyl-alpha-D-glucosamine biosynthesis; UDP-N-acetyl-alpha-D-glucosamine from N-acetyl-alpha-D-glucosamine 1-phosphate: step 1/1. Its pathway is bacterial outer membrane biogenesis; LPS lipid A biosynthesis. Functionally, catalyzes the last two sequential reactions in the de novo biosynthetic pathway for UDP-N-acetylglucosamine (UDP-GlcNAc). The C-terminal domain catalyzes the transfer of acetyl group from acetyl coenzyme A to glucosamine-1-phosphate (GlcN-1-P) to produce N-acetylglucosamine-1-phosphate (GlcNAc-1-P), which is converted into UDP-GlcNAc by the transfer of uridine 5-monophosphate (from uridine 5-triphosphate), a reaction catalyzed by the N-terminal domain. In Streptococcus pneumoniae serotype 19F (strain G54), this protein is Bifunctional protein GlmU.